The primary structure comprises 801 residues: Phenylalanine--tRNA ligase beta subunit (801 aa).

One can recognise a tRNA-binding domain in the interval 39 to 154; that stretch reads LKMPQKVVVG…GHLELGVELG (116 aa). Residues 398–475 form the B5 domain; it reads IDEITIKTTF…RIYGIDNVSS (78 aa). 4 residues coordinate Mg(2+): Asp-453, Asp-459, Glu-462, and Glu-463. The FDX-ACB domain occupies 708–800; it reads SKYQKSTRDL…LVREFDAVLR (93 aa).

This sequence belongs to the phenylalanyl-tRNA synthetase beta subunit family. Type 1 subfamily. In terms of assembly, tetramer of two alpha and two beta subunits. It depends on Mg(2+) as a cofactor.

The protein resides in the cytoplasm. The enzyme catalyses tRNA(Phe) + L-phenylalanine + ATP = L-phenylalanyl-tRNA(Phe) + AMP + diphosphate + H(+). The chain is Phenylalanine--tRNA ligase beta subunit from Helicobacter hepaticus (strain ATCC 51449 / 3B1).